Consider the following 418-residue polypeptide: UDP-N-acetyl-D-mannosamine dehydrogenase (418 aa).

The NAD(+) site is built by Tyr10, Ile11, Asp30, Thr85, and Thr119. UDP-N-acetyl-alpha-D-mannosaminouronate-binding residues include Arg152, Val153, Lys204, Asn208, Arg211, His242, Arg244, Thr249, and Gly255. Lys204 acts as the Proton donor/acceptor in catalysis. Catalysis depends on Cys258, which acts as the Nucleophile. Lys261 is an NAD(+) binding site. 2 residues coordinate UDP-N-acetyl-alpha-D-mannosaminouronate: Tyr318 and Lys319. Arg326 is an NAD(+) binding site. Position 398 (Arg398) interacts with UDP-N-acetyl-alpha-D-mannosaminouronate.

This sequence belongs to the UDP-glucose/GDP-mannose dehydrogenase family. In terms of assembly, homodimer.

It catalyses the reaction UDP-N-acetyl-alpha-D-mannosamine + 2 NAD(+) + H2O = UDP-N-acetyl-alpha-D-mannosaminouronate + 2 NADH + 3 H(+). Its function is as follows. Catalyzes the four-electron oxidation of UDP-N-acetyl-D-mannosamine (UDP-ManNAc), reducing NAD(+) and releasing UDP-N-acetylmannosaminuronic acid (UDP-ManNAcA). The polypeptide is UDP-N-acetyl-D-mannosamine dehydrogenase (Pyrococcus horikoshii (strain ATCC 700860 / DSM 12428 / JCM 9974 / NBRC 100139 / OT-3)).